A 379-amino-acid polypeptide reads, in one-letter code: 3-dehydroquinate synthase (379 aa).

NAD(+) is bound by residues 113 to 117, 137 to 138, lysine 150, and lysine 159; these read GVIGD and TS. Zn(2+) is bound by residues glutamate 192, histidine 256, and histidine 274.

This sequence belongs to the sugar phosphate cyclases superfamily. Dehydroquinate synthase family. The cofactor is Co(2+). Requires Zn(2+) as cofactor. NAD(+) is required as a cofactor.

The protein localises to the cytoplasm. The catalysed reaction is 7-phospho-2-dehydro-3-deoxy-D-arabino-heptonate = 3-dehydroquinate + phosphate. It participates in metabolic intermediate biosynthesis; chorismate biosynthesis; chorismate from D-erythrose 4-phosphate and phosphoenolpyruvate: step 2/7. Its function is as follows. Catalyzes the conversion of 3-deoxy-D-arabino-heptulosonate 7-phosphate (DAHP) to dehydroquinate (DHQ). The polypeptide is 3-dehydroquinate synthase (Zymomonas mobilis subsp. mobilis (strain ATCC 31821 / ZM4 / CP4)).